The chain runs to 378 residues: Glutamate 5-kinase (378 aa).

ATP is bound at residue lysine 14. Residues serine 54, aspartate 141, and asparagine 153 each coordinate substrate. ATP is bound at residue 173-174 (SD). The 78-residue stretch at 279-356 (AGRLTVDAGA…DEISAILGYD (78 aa)) folds into the PUA domain.

It belongs to the glutamate 5-kinase family.

The protein resides in the cytoplasm. It carries out the reaction L-glutamate + ATP = L-glutamyl 5-phosphate + ADP. It functions in the pathway amino-acid biosynthesis; L-proline biosynthesis; L-glutamate 5-semialdehyde from L-glutamate: step 1/2. Catalyzes the transfer of a phosphate group to glutamate to form L-glutamate 5-phosphate. In Brucella canis (strain ATCC 23365 / NCTC 10854 / RM-666), this protein is Glutamate 5-kinase.